A 334-amino-acid chain; its full sequence is Probable GTP 3',8-cyclase (334 aa).

The region spanning 24 to 256 (PYGRKVTGLR…RKKYIIDGVE (233 aa)) is the Radical SAM core domain. Position 33 (Arg33) interacts with GTP. [4Fe-4S] cluster-binding residues include Cys40 and Cys44. Residue Tyr46 participates in S-adenosyl-L-methionine binding. [4Fe-4S] cluster is bound at residue Cys47. A GTP-binding site is contributed by Lys85. Gly89 contributes to the S-adenosyl-L-methionine binding site. GTP is bound at residue Thr113. Ser137 serves as a coordination point for S-adenosyl-L-methionine. Position 176 (Lys176) interacts with GTP. [4Fe-4S] cluster contacts are provided by Cys269 and Cys272. 274–276 (RLR) serves as a coordination point for GTP. Residue Cys286 coordinates [4Fe-4S] cluster.

Belongs to the radical SAM superfamily. MoaA family. [4Fe-4S] cluster is required as a cofactor.

The catalysed reaction is GTP + AH2 + S-adenosyl-L-methionine = (8S)-3',8-cyclo-7,8-dihydroguanosine 5'-triphosphate + 5'-deoxyadenosine + L-methionine + A + H(+). It functions in the pathway cofactor biosynthesis; molybdopterin biosynthesis. Functionally, catalyzes the cyclization of GTP to (8S)-3',8-cyclo-7,8-dihydroguanosine 5'-triphosphate. This Methanosarcina acetivorans (strain ATCC 35395 / DSM 2834 / JCM 12185 / C2A) protein is Probable GTP 3',8-cyclase.